Here is a 465-residue protein sequence, read N- to C-terminus: Gamma-aminobutyric acid receptor subunit rho-2 (465 aa).

The signal sequence occupies residues 1-20; sequence MPYFSRLILFLFCLVVLVES. Residues 21–260 lie on the Extracellular side of the membrane; that stretch reads RKPKKRRWTG…LYINFTLRRH (240 aa). Arginine 105 contacts 4-aminobutanoate. N-linked (GlcNAc...) asparagine glycosylation is present at asparagine 120. Serine 169 serves as a coordination point for 4-aminobutanoate. Cysteines 178 and 192 form a disulfide. 4-aminobutanoate is bound at residue glutamate 197. An N-linked (GlcNAc...) asparagine glycan is attached at asparagine 254. The helical transmembrane segment at 261–281 threads the bilayer; sequence IFFFLLQTYFPATLMVMLSWV. The Cytoplasmic segment spans residues 282–293; the sequence is SFWIDRRAVPAR. A helical transmembrane segment spans residues 294 to 314; sequence VSLGITTVLTMSTIITGVNAS. Topologically, residues 315 to 325 are extracellular; sequence MPRVSYIKAVD. The helical transmembrane segment at 326–346 threads the bilayer; sequence IYLWVSFVFVFLSVLEYAAVN. Topologically, residues 347 to 444 are cytoplasmic; the sequence is YLTTVQERKE…FQNTHAIDKY (98 aa). A helical transmembrane segment spans residues 445 to 465; the sequence is SRLIFPASYIFFNLIYWSVFA.

Belongs to the ligand-gated ion channel (TC 1.A.9) family. Gamma-aminobutyric acid receptor (TC 1.A.9.5) subfamily. GABRR2 sub-subfamily. In terms of assembly, three rho subunits (rho-1/GBRR1, rho-2/GBRR2 and rho-3/GBRR3) coassemble either to form functional homopentamers or heteropentamers. Rho-2 is unable to form a functional homopentamer. Interacts with SQSTM1.

It is found in the postsynaptic cell membrane. The protein resides in the cell membrane. It catalyses the reaction chloride(in) = chloride(out). Functionally, rho subunit of the pentameric ligand-gated chloride channels responsible for mediating the effects of gamma-aminobutyric acid (GABA), the major inhibitory neurotransmitter in the brain. Rho-containing GABA-gated chloride channels are a subclass of GABA(A) receptors (GABAARs) entirely composed of rho subunits, where GABA molecules bind at the rho intersubunit interfaces. When activated by GABA, rho-GABAARs selectively allow the flow of chloride anions across the cell membrane down their electrochemical gradient. Rho-2 GABAARs may contribute to the regulation of glial development in the cerebellum by controlling extrasynaptic transmission. Rho-2 GABAARs are also involved in neuronal tonic (extrasynaptic) and phasic (synaptic) transmission in the Purkinje neurons of the cerebellum. Rho-2 GABAARs expressed in retina may play a role in retinal neurotransmission. The protein is Gamma-aminobutyric acid receptor subunit rho-2 (GABRR2) of Bos taurus (Bovine).